The chain runs to 152 residues: TOMM20-like protein 1 (152 aa).

Residues 1–6 (MPSVRL) lie on the Mitochondrial intermembrane side of the membrane. The helical transmembrane segment at 7-27 (GVGLLAGLAAGGAVVLLSYCV) threads the bilayer. At 28 to 152 (YLDWRRHRDP…STEHLKDDPD (125 aa)) the chain is on the cytoplasmic side.

This sequence belongs to the Tom20 family.

Its subcellular location is the mitochondrion outer membrane. The sequence is that of TOMM20-like protein 1 (Tomm20l) from Mus musculus (Mouse).